The sequence spans 386 residues: WD repeat-containing protein 89 (386 aa).

WD repeat units follow at residues 21-65, 68-106, 111-155, 167-207, 213-253, and 318-357; these read KEPT…VIRE, GYPGLNGVKFANSHDSVYSSCTDGTVKCWDARLASGKPV, GYPS…QDLS, THSD…EDDA, NSVS…TDEP, and GHAATVRSFCWNMQDDSLLTGGEDAQLLLWKPGAVEKTFT.

The chain is WD repeat-containing protein 89 (WDR89) from Bos taurus (Bovine).